The primary structure comprises 98 residues: Putative pterin-4-alpha-carbinolamine dehydratase (98 aa).

This sequence belongs to the pterin-4-alpha-carbinolamine dehydratase family.

It carries out the reaction (4aS,6R)-4a-hydroxy-L-erythro-5,6,7,8-tetrahydrobiopterin = (6R)-L-erythro-6,7-dihydrobiopterin + H2O. This chain is Putative pterin-4-alpha-carbinolamine dehydratase, found in Parasynechococcus marenigrum (strain WH8102).